The chain runs to 2348 residues: Transcription factor HIVEP3 (2348 aa).

The segment at 1–105 is disordered; the sequence is MDPDQSIKGT…AFMSPGKPEH (105 aa). Residues 27–72 are compositionally biased toward polar residues; sequence IQTSVSSSAPYPGSGTTAPSESATQELLATQPFSGPSQEKTGQQQK. 2 consecutive C2H2-type zinc fingers follow at residues 185-207 and 213-235; these read YICQ…IRSH and YPCG…RKSH. The segment at 185-235 is ZAS1; the sequence is YICQYCSRPCAKPSVLQKHIRSHTGERPYPCGPCGFSFKTKSNLYKHRKSH. Positions 204–1055 are no DNA binding activity or transactivation activity, but complete prevention of TRAF-dependent NF-Kappa-B activation; associates with TRAF2 and JUN; sequence IRSHTGERPY…KGKQESSEEP (852 aa). 3 disordered regions span residues 239 to 401, 475 to 532, and 561 to 628; these read IKAG…SPPN, DSVK…PLLR, and ADPE…TKKG. An acidic 1 region spans residues 257-280; that stretch reads EMERIPGEEFEEPTEGESTDSEEE. Acidic residues predominate over residues 264 to 281; that stretch reads EEFEEPTEGESTDSEEET. The segment covering 298 to 323 has biased composition (low complexity); it reads PLLSSSLYSSGSHGSSQERCSLSQSS. Basic and acidic residues predominate over residues 338 to 352; it reads SSEHPLSHKPEDTHT. Polar residues-rich tracts occupy residues 372 to 401 and 485 to 495; these read TFLS…SPPN and TRRSSVESPKS. Composition is skewed to low complexity over residues 513 to 527 and 589 to 605; these read QSLL…STHP and PLGG…SSKD. Residues 606–623 show a composition bias toward basic and acidic residues; it reads PTSKPSDEPEPKESDLTK. Residues 633 to 663 form a CCHC HIVEP-type zinc finger; it reads GANYECTICGARYKKRDNYEAHKKYYCSELQ. 5 disordered regions span residues 692–1098, 1229–1274, 1386–1427, 1441–1555, and 1654–1694; these read KLGA…PPYT, LPPV…TSAP, EGCS…KADE, STED…EGTD, and EVHL…GEPA. Over residues 736–749 the composition is skewed to low complexity; it reads STKSPAEASKSAPS. Residues 844 to 865 form an acidic 2 region; sequence EEPDRPDTEPEPPPKEPEKTEE. Over residues 845 to 865 the composition is skewed to basic and acidic residues; the sequence is EPDRPDTEPEPPPKEPEKTEE. Residues 885-891 carry the Nuclear localization signal motif; that stretch reads PKKKRLR. The span at 893 to 929 shows a compositional bias: low complexity; sequence AEMAQSSGESSFESSVPLSRSPSQESSISLSGSSRSA. Over residues 930–939 the composition is skewed to basic and acidic residues; it reads SFDREDHGKA. Composition is skewed to polar residues over residues 975 to 985, 1062 to 1073, and 1247 to 1256; these read SEQSPNVPHSS, TKSSVPQISVGT, and SSSTEYSSDI. Residues 1409 to 1433 adopt a coiled-coil conformation; it reads METQQQKRVKEEEASKADEKLELVS. 3 stretches are compositionally biased toward basic and acidic residues: residues 1416–1427, 1442–1452, and 1518–1527; these read RVKEEEASKADE, TEDRKKTEKPH, and VKKEDPKEQT. Positions 1538–1547 are enriched in low complexity; sequence LPLSDTSPKP. Residues 1665–1694 show a composition bias toward basic and acidic residues; sequence SQKDPARVEKEEKQGKAEEGTPTSKRGEPA. 2 C2H2-type zinc fingers span residues 1720–1742 and 1748–1772; these read YVCE…IRTH and YVCK…SKAH. Residues 1720 to 1772 form a ZAS2 region; it reads YVCEECGIRCKKPSMLKKHIRTHTDVRPYVCKHCHFAFKTKGNLTKHMKSKAH. Residues 1783–1841 are acidic 3; sequence EELEAEEGTSDDLHQDSEGQEGAEAVEEHQFSDLEDSDSDSDLDEDEEEEEEEEESQDE. Disordered regions lie at residues 1786–1990 and 2009–2038; these read EAEE…HLCG and PAGL…ESPP. Residues 1815–1840 show a composition bias toward acidic residues; the sequence is DLEDSDSDSDLDEDEEEEEEEEESQD. Polar residues predominate over residues 1871 to 1902; the sequence is PDSTSDEVPQGSSISEATHLTASSCSTPSRGT. Tandem repeats lie at residues 1897 to 1900, 1927 to 1930, 1933 to 1936, 1961 to 1964, and 2024 to 2027. The segment covering 1952–1961 has biased composition (polar residues); the sequence is KNDSSPQQCS. The 5 X 4 AA tandem repeats of [ST]-P-X-[RK] stretch occupies residues 2053–2148; the sequence is SPSADKSGLG…QLLSRAPCPL (96 aa). 2 disordered regions span residues 2184 to 2265 and 2284 to 2348; these read SDLT…QGHQ and KASS…PPSI. Positions 2203-2216 are enriched in low complexity; sequence SPSASVSPVAKVSK. Over residues 2293–2314 the composition is skewed to polar residues; it reads RSSSMDCLAETSTYSPPRSRNL.

In terms of assembly, interacts with TRAF1 and TRAF2 as well as with JUN. Forms a multimeric complex with RUNX2 and E3 ubiquitin ligase WWP1. In terms of processing, phosphorylated on threonine and serine residues. Phosphorylation by cyclin-dependent kinase CDK1 decreases HIVEP3 DNA binding affinity, and by epidermal growth factor receptor kinase increases its DNA binding affinity. In terms of tissue distribution, expressed in macrophages, lymphocytes, brain, thymus, spleen and bone marrow. Expressed in osteoblasts, whole bone and, to a lesser extent, in osteoclasts.

It is found in the cytoplasm. The protein resides in the nucleus. Its function is as follows. Plays a role of transcription factor; binds to recognition signal sequences (Rss heptamer) for somatic recombination of immunoglobulin and T-cell receptor gene segments; Also binds to the kappa-B motif of gene such as S100A4, involved in cell progression and differentiation. Kappa-B motif is a gene regulatory element found in promoters and enhancers of genes involved in immunity, inflammation, and growth and that responds to viral antigens, mitogens, and cytokines. Involvement of HIVEP3 in cell growth is strengthened by the fact that its down-regulation promotes cell cycle progression with ultimate formation of multinucleated giant cells. Strongly inhibits TNF-alpha-induced NF-kappa-B activation; Interferes with nuclear factor NF-kappa-B by several mechanisms: as transcription factor, by competing for Kappa-B motif and by repressing transcription in the nucleus; through a non transcriptional process, by inhibiting nuclear translocation of RELA by association with TRAF2, an adapter molecule in the tumor necrosis factor signaling, which blocks the formation of IKK complex. Interaction with TRAF proteins inhibits both NF-Kappa-B-mediated and c-Jun N-terminal kinase/JNK-mediated responses that include apoptosis and pro-inflammatory cytokine gene expression. Positively regulates the expression of IL2 in T-cell. Essential regulator of adult bone formation. This chain is Transcription factor HIVEP3 (Hivep3), found in Mus musculus (Mouse).